Reading from the N-terminus, the 554-residue chain is 4-coumarate--CoA ligase 3 (554 aa).

ATP contacts are provided by S188, S189, G190, T191, T192, and K196. (E)-4-coumaroyl-AMP is bound by residues Y238 and S242. K259 contacts CoA. The SBD1 stretch occupies residues D261 to Q330. (E)-4-coumaroyl-AMP-binding residues include A308, Q330, G331, T335, and M343. 3 residues coordinate ATP: Q330, G331, and T335. Residues G331–Y398 are SBD2. 2 residues coordinate ATP: D419 and R434. (E)-4-coumaroyl-AMP is bound by residues K436 and K440. The CoA site is built by K442 and G443. K525 is an ATP binding site.

The protein belongs to the ATP-dependent AMP-binding enzyme family. It depends on Mg(2+) as a cofactor. As to expression, expressed in root exodermis and epidermis cells, stem vascular cells, leaf developing vascular bundle cells and parenchyma cells, lemma, palea, stamens and pistil.

The enzyme catalyses (E)-ferulate + ATP + CoA = (E)-feruloyl-CoA + AMP + diphosphate. It carries out the reaction (E)-4-coumarate + ATP + CoA = (E)-4-coumaroyl-CoA + AMP + diphosphate. It catalyses the reaction (E)-caffeate + ATP + CoA = (E)-caffeoyl-CoA + AMP + diphosphate. The catalysed reaction is (E)-cinnamate + ATP + CoA = (E)-cinnamoyl-CoA + AMP + diphosphate. The enzyme catalyses (E)-ferulate + ATP + H(+) = (E)-feruloyl-AMP + diphosphate. It carries out the reaction (E)-feruloyl-AMP + CoA = (E)-feruloyl-CoA + AMP + H(+). It catalyses the reaction (E)-4-coumarate + ATP + H(+) = (E)-4-coumaroyl-AMP + diphosphate. The catalysed reaction is (E)-4-coumaroyl-AMP + CoA = (E)-4-coumaroyl-CoA + AMP + H(+). The enzyme catalyses (E)-caffeate + ATP + H(+) = (E)-caffeoyl-AMP + diphosphate. It carries out the reaction (E)-caffeoyl-AMP + CoA = (E)-caffeoyl-CoA + AMP + H(+). Its pathway is phytoalexin biosynthesis; 3,4',5-trihydroxystilbene biosynthesis; 3,4',5-trihydroxystilbene from trans-4-coumarate: step 1/2. In terms of biological role, involved in the phenylpropanoid metabolism by mediating the activation of a number of hydroxycinnamates for the biosynthesis of monolignols and other phenolic secondary metabolites. Catalyzes the formation of CoA esters of cinnamate, 4-coumarate, caffeate and ferulate. Is more efficient with substrates in the following order: ferulate &gt; 4-coumarate &gt; caffeate &gt; cinnamate. Possesses very high activity compared to 4CL1, 4CL2, 4CL4 and 4CL5. Cannot convert sinapate to its corresponding CoA ester. May play a role in the synthesis of lignin as well as other phenolic compounds. Follows a two-step reaction mechanism, wherein the carboxylate substrate first undergoes adenylation by ATP, followed by a thioesterification in the presence of CoA to yield the final CoA thioester. The sequence is that of 4-coumarate--CoA ligase 3 from Oryza sativa subsp. japonica (Rice).